A 449-amino-acid polypeptide reads, in one-letter code: Phosphoglucosamine mutase (449 aa).

Residue S101 is the Phosphoserine intermediate of the active site. Mg(2+) is bound by residues S101, D241, D243, and D245. S101 is modified (phosphoserine).

It belongs to the phosphohexose mutase family. It depends on Mg(2+) as a cofactor. Activated by phosphorylation.

The catalysed reaction is alpha-D-glucosamine 1-phosphate = D-glucosamine 6-phosphate. Catalyzes the conversion of glucosamine-6-phosphate to glucosamine-1-phosphate. This Acetivibrio thermocellus (strain ATCC 27405 / DSM 1237 / JCM 9322 / NBRC 103400 / NCIMB 10682 / NRRL B-4536 / VPI 7372) (Clostridium thermocellum) protein is Phosphoglucosamine mutase.